Here is a 159-residue protein sequence, read N- to C-terminus: Transcription elongation factor GreA (159 aa).

Positions 44 to 75 (SENAEYDAAREQQSQTEARIADLENKLSTATI) form a coiled coil.

It belongs to the GreA/GreB family.

Its function is as follows. Necessary for efficient RNA polymerase transcription elongation past template-encoded arresting sites. The arresting sites in DNA have the property of trapping a certain fraction of elongating RNA polymerases that pass through, resulting in locked ternary complexes. Cleavage of the nascent transcript by cleavage factors such as GreA or GreB allows the resumption of elongation from the new 3'terminus. GreA releases sequences of 2 to 3 nucleotides. The chain is Transcription elongation factor GreA from Chlorobium limicola (strain DSM 245 / NBRC 103803 / 6330).